The primary structure comprises 126 residues: Small ribosomal subunit protein bS6 (126 aa).

It belongs to the bacterial ribosomal protein bS6 family.

Functionally, binds together with bS18 to 16S ribosomal RNA. The sequence is that of Small ribosomal subunit protein bS6 from Actinobacillus succinogenes (strain ATCC 55618 / DSM 22257 / CCUG 43843 / 130Z).